A 122-amino-acid polypeptide reads, in one-letter code: MDRSQALYYPWDSFCLLSRCSIFILSTTLEDSRTLLSHLGLQNPHEVQGTFVPEARVPGVRLEATAGHQSLSEPSGWVYYRHKHSDLVDPADLHLQGASYRRSTIRSYLMVKKVLYLVSSAP.

Part of the gene cluster that mediates the biosynthesis of elsinochromes, pigments consisting of at least four interconvertible tautomers (A, B, C and D) that have a core phenolic quinone to which various side chains are attached and which play an important role in fungal pathogenesis. The non-reducing polyketide synthase PKS1 was proposed to iteratively catalyze decarboxylation between acetyl-CoA and malonyl-CoA subunits for polyketide chain elongation. The released polyketide undergoes cyclization to form an aromatic ring, and proceeds via serial modification steps to produce the heptaketide back- bone of elsinochrome. As elsinochrome has a symmetrical structure, two identical heptaketides are fused to form a core 1,2-dihydrobenzo-perylene ring structure, which can then be successively modified to produce the various derivatives of elsinochrome. Some of these reactions may be cooperatively carried out, at least in part, by the products of RDT1, OXR1 and PKS1. PRF1, embedded within the elsinochrome cluster possibly functions to stabilize some of the biosynthetic enzymes required for elsinochrome production. As prefoldin is a hexamer containing 2 a and 4 b subunits, additional prefoldin subunits, whose coding genes may not immediately link to the elsinochrome biosynthetic gene cluster, are required to fulfill the chaperone function. In addition, no methyltransferase-coding gene exists within the biosynthetic gene cluster, even though elsinochrome has four methyl groups at positions C3, C7, C8 and C12. Apparently, the identified gene cluster does not contain the entire entourage of genes responsible for elsinochrome biosynthesis. Once elsinochrome is synthesized, it must be exported outside the fungal cells, which is probably accomplished by the ECT1 transporter, to avoid toxicity. This chain is Elsinochromes biosynthesis cluster protein HP4, found in Elsinoe fawcettii (Citrus scab fungus).